Consider the following 276-residue polypeptide: Large ribosomal subunit protein uL2 (276 aa).

Residues 224–276 (AMNPIDHPHGGGEGKTSGGRNPVTPWGVPTKGKKTRKRNKSSNKYIKRVSDKG) are disordered. Basic residues predominate over residues 254–270 (KGKKTRKRNKSSNKYIK).

This sequence belongs to the universal ribosomal protein uL2 family. Part of the 50S ribosomal subunit. Forms a bridge to the 30S subunit in the 70S ribosome.

Functionally, one of the primary rRNA binding proteins. Required for association of the 30S and 50S subunits to form the 70S ribosome, for tRNA binding and peptide bond formation. It has been suggested to have peptidyltransferase activity; this is somewhat controversial. Makes several contacts with the 16S rRNA in the 70S ribosome. The polypeptide is Large ribosomal subunit protein uL2 (Ehrlichia chaffeensis (strain ATCC CRL-10679 / Arkansas)).